The chain runs to 333 residues: MHIAVLGAGSWGTTLAVLLARKGYAVNLWAHRPEFADQLAAERENRRYLNGVRFPDTLRVFTSLHEAVSPADMVVTAVPSQALRETVEQIRDLPMQGRVIVNVAKGIELKTGKRMSEVLLEALPGVRISGVAALYGPSHAEEVSKEQPTTVVASSPSVETANRVQEVFHTSMFRVYTNTDIIGVEIAGSVKNIIAIAAGISDGIGYGDNAKAAIITRGLAEMSRLAVSLGGDPVTVSGLAGIGDLVVTCLSRHSRNRYVGEEIGRGRSLDDVVAHMNMVAEGVFTSKAVYDLSRTKGVEMPITQAVYEMLFEGKPVQQAILDLMTREPKKEVY.

Positions 10, 11, 31, 32, and 105 each coordinate NADPH. Residues K105, G136, and S138 each coordinate sn-glycerol 3-phosphate. Residue A140 participates in NADPH binding. K191, D244, S254, R255, and N256 together coordinate sn-glycerol 3-phosphate. The active-site Proton acceptor is K191. R255 provides a ligand contact to NADPH. Residues V279 and E281 each coordinate NADPH.

This sequence belongs to the NAD-dependent glycerol-3-phosphate dehydrogenase family.

It is found in the cytoplasm. The catalysed reaction is sn-glycerol 3-phosphate + NAD(+) = dihydroxyacetone phosphate + NADH + H(+). It catalyses the reaction sn-glycerol 3-phosphate + NADP(+) = dihydroxyacetone phosphate + NADPH + H(+). It functions in the pathway membrane lipid metabolism; glycerophospholipid metabolism. Catalyzes the reduction of the glycolytic intermediate dihydroxyacetone phosphate (DHAP) to sn-glycerol 3-phosphate (G3P), the key precursor for phospholipid synthesis. This is Glycerol-3-phosphate dehydrogenase [NAD(P)+] from Chlorobium limicola (strain DSM 245 / NBRC 103803 / 6330).